Here is a 254-residue protein sequence, read N- to C-terminus: Phosphoribosylaminoimidazole-succinocarboxamide synthase (254 aa).

It belongs to the SAICAR synthetase family.

The catalysed reaction is 5-amino-1-(5-phospho-D-ribosyl)imidazole-4-carboxylate + L-aspartate + ATP = (2S)-2-[5-amino-1-(5-phospho-beta-D-ribosyl)imidazole-4-carboxamido]succinate + ADP + phosphate + 2 H(+). It participates in purine metabolism; IMP biosynthesis via de novo pathway; 5-amino-1-(5-phospho-D-ribosyl)imidazole-4-carboxamide from 5-amino-1-(5-phospho-D-ribosyl)imidazole-4-carboxylate: step 1/2. This is Phosphoribosylaminoimidazole-succinocarboxamide synthase from Gluconobacter oxydans (strain 621H) (Gluconobacter suboxydans).